A 397-amino-acid polypeptide reads, in one-letter code: ATP-dependent RNA helicase RhlB (397 aa).

A Q motif motif is present at residues 8–36 (TRFHDFNLAPELMHAIQDLGFPYCTPIQA). Residues 39–219 (LGFTLKGKDA…KQWTTDPSIV (181 aa)) enclose the Helicase ATP-binding domain. 52–59 (AQTGTGKT) lines the ATP pocket. A DEAD box motif is present at residues 165 to 168 (DEAD). Residues 242 to 392 (DKYKLLYNLV…TPPTHLLRAV (151 aa)) form the Helicase C-terminal domain.

The protein belongs to the DEAD box helicase family. RhlB subfamily. Component of the RNA degradosome, which is a multiprotein complex involved in RNA processing and mRNA degradation.

The protein localises to the cytoplasm. It catalyses the reaction ATP + H2O = ADP + phosphate + H(+). Functionally, DEAD-box RNA helicase involved in RNA degradation. Has RNA-dependent ATPase activity and unwinds double-stranded RNA. This is ATP-dependent RNA helicase RhlB from Pseudomonas syringae pv. tomato (strain ATCC BAA-871 / DC3000).